Here is a 2146-residue protein sequence, read N- to C-terminus: Phospholipid-transporting ATPase ABCA7 (2146 aa).

The chain crosses the membrane as a helical span at residues 22–42 (PVQLLVELLWPLFLFFILVAV). The Extracellular portion of the chain corresponds to 43-549 (RHSHPPLEHH…DVFLRVLSRS (507 aa)). Cys-75 and Cys-225 are joined by a disulfide. N-linked (GlcNAc...) asparagine glycosylation is present at Asn-312. The next 6 helical transmembrane spans lie at 550–570 (LPLF…KAVV), 593–613 (LGWF…LVLV), 626–646 (GVVF…SFLL), 655–675 (LAAA…VLCV), 687–707 (VAAS…LALL), and 727–747 (VFSL…YGLA). Residues 807 to 1038 (VSVRSLEKRF…LGSGYYLTLV (232 aa)) form the ABC transporter 1 domain. 841-848 (GHNGAGKT) lines the ATP pocket. A helical membrane pass occupies residues 849–869 (TTLSILSGLFPPSGGSAFILG). The span at 1048–1066 (EKADTDMEGSVDTRQEKKN) shows a compositional bias: basic and acidic residues. Disordered regions lie at residues 1048 to 1072 (EKAD…QGSR) and 1185 to 1209 (TALE…DAVG). A helical transmembrane segment spans residues 1243–1263 (IVLPALFVGLALVFSLIVPPF). Residues 1264-1537 (GHYPALRLSP…ALMASSVDVL (274 aa)) lie on the Extracellular side of the membrane. A disulfide bridge connects residues Cys-1345 and Cys-1359. 6 consecutive transmembrane segments (helical) span residues 1538–1558 (VSIC…LVLI), 1584–1604 (FLWD…IFLA), 1621–1641 (LLLL…SFFF), 1649–1669 (VVLT…TFVL), 1683–1703 (ILKQ…LIDM), and 1729–1749 (VVGK…LFTL). The ABC transporter 2 domain maps to 1793–2025 (LVLRNLTKVY…FAAGHTLTLR (233 aa)). Residue 1827 to 1834 (GVNGAGKT) participates in ATP binding. The interval 2104-2146 (QGKDEDTEEQKEAGVGVDPAPGLQHPKRVSQFLDDPSTAETVL) is disordered.

It belongs to the ABC transporter superfamily. ABCA family. Post-translationally, N-glycosylated. In terms of tissue distribution, expressed in leukocytes (at protein level). Widely expressed. Highly expressed in myelo-lymphatic tissues including peripheral leukocytes, thymus, spleen and bone marrow. Expressed in the hippocampus and the cerebellum. Isoform 2: Abundant in lymph node, spleen, thymus and trachea. Isoform 1: Strongly expressed in brain and bone marrow.

The protein localises to the cell membrane. The protein resides in the golgi apparatus membrane. It is found in the early endosome membrane. It localises to the cytoplasm. Its subcellular location is the cell projection. The protein localises to the ruffle membrane. The protein resides in the phagocytic cup. It is found in the endoplasmic reticulum. The catalysed reaction is ATP + H2O + phospholipidSide 1 = ADP + phosphate + phospholipidSide 2.. The enzyme catalyses a 1,2-diacyl-sn-glycero-3-phosphocholine(out) + ATP + H2O = a 1,2-diacyl-sn-glycero-3-phosphocholine(in) + ADP + phosphate + H(+). It catalyses the reaction a 1,2-diacyl-sn-glycero-3-phospho-L-serine(out) + ATP + H2O = a 1,2-diacyl-sn-glycero-3-phospho-L-serine(in) + ADP + phosphate + H(+). With respect to regulation, ATPase activity is decreased by cholesterol and ceramide. ATPase activity is stimulated by phosphatidylserine, phosphatidylcholine and sphingomyelin, but phosphatidylserine is more effective. Functionally, catalyzes the translocation of specific phospholipids from the cytoplasmic to the extracellular/lumenal leaflet of membrane coupled to the hydrolysis of ATP. Transports preferentially phosphatidylserine over phosphatidylcholine. Plays a role in lipid homeostasis and macrophage-mediated phagocytosis. Binds APOA1 and may function in apolipoprotein-mediated phospholipid efflux from cells. May also mediate cholesterol efflux. May regulate cellular ceramide homeostasis during keratinocyte differentiation. Involved in lipid raft organization and CD1D localization on thymocytes and antigen-presenting cells, which plays an important role in natural killer T-cell development and activation. Plays a role in phagocytosis of apoptotic cells by macrophages. Macrophage phagocytosis is stimulated by APOA1 or APOA2, probably by stabilization of ABCA7. Also involved in phagocytic clearance of amyloid-beta by microglia cells and macrophages. Further limits amyloid-beta production by playing a role in the regulation of amyloid-beta A4 precursor protein (APP) endocytosis and/or processing. Amyloid-beta is the main component of amyloid plaques found in the brains of Alzheimer patients. The protein is Phospholipid-transporting ATPase ABCA7 of Homo sapiens (Human).